Here is a 189-residue protein sequence, read N- to C-terminus: UPF0688 protein C1orf174 homolog (189 aa).

A disordered region spans residues 53-137 (QMAGDGGEAK…TTDPSVFFDE (85 aa)). 2 stretches are compositionally biased toward basic and acidic residues: residues 59-73 (GEAKRLPKRPFHGEV) and 93-103 (APGERRGKENS).

The protein belongs to the UPF0688 family.

It is found in the nucleus. In Danio rerio (Zebrafish), this protein is UPF0688 protein C1orf174 homolog.